Here is a 128-residue protein sequence, read N- to C-terminus: Sulfurtransferase TusD (128 aa).

The active-site Cysteine persulfide intermediate is Cys78.

It belongs to the DsrE/TusD family. In terms of assembly, heterohexamer, formed by a dimer of trimers. The hexameric TusBCD complex contains 2 copies each of TusB, TusC and TusD. The TusBCD complex interacts with TusE.

The protein localises to the cytoplasm. Functionally, part of a sulfur-relay system required for 2-thiolation of 5-methylaminomethyl-2-thiouridine (mnm(5)s(2)U) at tRNA wobble positions. Accepts sulfur from TusA and transfers it in turn to TusE. In Salmonella newport (strain SL254), this protein is Sulfurtransferase TusD.